The sequence spans 463 residues: Zinc finger protein interacting with ribonucleoprotein K (463 aa).

Residues 14–89 (VTFQDVAICF…PKTNLCEKCV (76 aa)) enclose the KRAB domain. Disordered stretches follow at residues 106 to 128 (HSTEASSKVDQHQDHNSTGKPLE) and 171 to 211 (KYRK…TSNG). Basic and acidic residues predominate over residues 174 to 191 (KSTEGRKETSHESDKSEE). The segment covering 192 to 201 (CQSLSSQKQT) has biased composition (polar residues). 9 C2H2-type zinc fingers span residues 215–237 (YECSKCGKTFRGKYSLDQHQRVH), 243–265 (WECRDCGKFFSQTSHLNDHRRIH), 271–293 (YECSECGKLFRQNSSLVDHQKTH), 299–321 (YECSQCGKSFSQKATLVKHKRVH), 327–349 (YKCSECGNSFSQSAILNQHRRIH), 355–377 (YECRECGKSFSQKATLIKHQRVH), 383–405 (YKCSECGKSFSQSSILIQHRRIH), 411–433 (YECSQCGKSFSQKSGLIQHQVVH), and 439–461 (YECDTCGNSFSQCSSLIHHQKCH).

The protein belongs to the krueppel C2H2-type zinc-finger protein family. In terms of assembly, interacts with HNRPK. Expressed in ovary and liver, and at lower levels in brain and muscle.

The protein localises to the nucleus. Its function is as follows. May be a transcriptional repressor. The chain is Zinc finger protein interacting with ribonucleoprotein K (Zik1) from Mus musculus (Mouse).